Consider the following 306-residue polypeptide: D-glucosamine-6-phosphate 4-epimerase (306 aa).

One can recognise an SIS domain in the interval 19-153 (DIPGVKTAEK…TGSNYRVQDL (135 aa)). The Proton acceptor role is filled by Glu200. Residue His216 is the Proton donor of the active site. Arg296 serves as the catalytic Proton acceptor.

Belongs to the PGI/PMI family.

It catalyses the reaction D-glucosamine 6-phosphate = D-galactosamine 6-phosphate. Its function is as follows. Involved in the synthesis of UDP-N-acetylgalactosamine (UDP-GalNAc). Catalyzes the conversion of glucosamine-6-phosphate (GlcN-6-P) to galactosamine-6-phosphate (GalN-6-P). This Sulfolobus acidocaldarius (strain ATCC 33909 / DSM 639 / JCM 8929 / NBRC 15157 / NCIMB 11770) protein is D-glucosamine-6-phosphate 4-epimerase.